Reading from the N-terminus, the 361-residue chain is Chorismate synthase (361 aa).

Residues Arg-48 and Arg-54 each coordinate NADP(+). Residues 125 to 127 (RSS), 238 to 239 (NA), Gly-278, 293 to 297 (KPTSS), and Arg-319 each bind FMN.

It belongs to the chorismate synthase family. Homotetramer. The cofactor is FMNH2.

The enzyme catalyses 5-O-(1-carboxyvinyl)-3-phosphoshikimate = chorismate + phosphate. It functions in the pathway metabolic intermediate biosynthesis; chorismate biosynthesis; chorismate from D-erythrose 4-phosphate and phosphoenolpyruvate: step 7/7. Catalyzes the anti-1,4-elimination of the C-3 phosphate and the C-6 proR hydrogen from 5-enolpyruvylshikimate-3-phosphate (EPSP) to yield chorismate, which is the branch point compound that serves as the starting substrate for the three terminal pathways of aromatic amino acid biosynthesis. This reaction introduces a second double bond into the aromatic ring system. The protein is Chorismate synthase of Pectobacterium atrosepticum (strain SCRI 1043 / ATCC BAA-672) (Erwinia carotovora subsp. atroseptica).